The chain runs to 407 residues: Deacetylase Atu3266 (407 aa).

Positions 75, 77, 173, 206, 229, and 289 each coordinate Zn(2+). N6-carboxylysine is present on K173.

This sequence belongs to the metallo-dependent hydrolases superfamily. Atu3266/EF_0837 deacetylase family. Homohexamer, dimer of trimers. It depends on Zn(2+) as a cofactor.

Its function is as follows. Esterase that catalyzes the deacetylation of acetyl-(R)-mandelate (in vitro). Can also hydrolyze acetyl glycolate, but with lower efficiency. Has very low N-acetyl-D-amino acid deacetylase activity with N-acetyl-D-serine and N-acetyl-D-threonine (in vitro). Theoretical substrate docking studies suggest that other N-acetylated amino acids may optimally occupy the active site and may in fact be the physiological substrates. This is Deacetylase Atu3266 from Agrobacterium fabrum (strain C58 / ATCC 33970) (Agrobacterium tumefaciens (strain C58)).